A 53-amino-acid polypeptide reads, in one-letter code: Large ribosomal subunit protein bL33 (53 aa).

This sequence belongs to the bacterial ribosomal protein bL33 family.

The protein is Large ribosomal subunit protein bL33 of Ureaplasma parvum serovar 3 (strain ATCC 27815 / 27 / NCTC 11736).